The following is a 92-amino-acid chain: Putative phosphotransferase enzyme IIB component BB_0367 (92 aa).

Positions 10-92 (IKVAEHIVEC…ILYMMNEQKQ (83 aa)) constitute a PTS EIIB type-1 domain.

The protein localises to the cytoplasm. Functionally, the phosphoenolpyruvate-dependent sugar phosphotransferase system (PTS), a major carbohydrate active -transport system, catalyzes the phosphorylation of incoming sugar substrates concomitant with their translocation across the cell membrane. The protein is Putative phosphotransferase enzyme IIB component BB_0367 of Borreliella burgdorferi (strain ATCC 35210 / DSM 4680 / CIP 102532 / B31) (Borrelia burgdorferi).